Reading from the N-terminus, the 300-residue chain is ETS homologous factor (300 aa).

The PNT domain occupies 29–115 (STCNVSSGFF…SNLQHLKWNG (87 aa)). A disordered region spans residues 179-204 (LPIAESPDTKKEQDHPTKPHTKKHNP). A compositionally biased stretch (basic and acidic residues) spans 185–195 (PDTKKEQDHPT). The ETS DNA-binding region spans 207-289 (THLWEFIRDI…DGRRLVYKFG (83 aa)).

The protein belongs to the ETS family.

The protein resides in the nucleus. Transcriptional activator that may play a role in regulating epithelial cell differentiation and proliferation. May act as a repressor for a specific subset of ETS/AP-1-responsive genes, and as a modulator of the nuclear response to mitogen-activated protein kinase signaling cascades. Binds to DNA sequences containing the consensus nucleotide core sequence GGAA. Involved in regulation of TNFRSF10B/DR5 expression through Ets-binding sequences on the TNFRSF10B/DR5 promoter. In Bos taurus (Bovine), this protein is ETS homologous factor (EHF).